A 329-amino-acid polypeptide reads, in one-letter code: Holliday junction branch migration complex subunit RuvB (329 aa).

Residues 1–180 (MKNILQSTEC…FGIPIHLEFY (180 aa)) are large ATPase domain (RuvB-L). ATP-binding positions include Arg20, Gly61, Lys64, Thr65, Thr66, 127–129 (EDF), Arg170, Tyr180, and Arg217. Thr65 is a binding site for Mg(2+). Residues 181-252 (STEELTKVIQ…FADKALLRLG (72 aa)) form a small ATPAse domain (RuvB-S) region. Residues 255-329 (KLGLDRQDIQ…ISHLREQEYI (75 aa)) are head domain (RuvB-H). DNA contacts are provided by Arg308 and Arg313.

It belongs to the RuvB family. In terms of assembly, homohexamer. Forms an RuvA(8)-RuvB(12)-Holliday junction (HJ) complex. HJ DNA is sandwiched between 2 RuvA tetramers; dsDNA enters through RuvA and exits via RuvB. An RuvB hexamer assembles on each DNA strand where it exits the tetramer. Each RuvB hexamer is contacted by two RuvA subunits (via domain III) on 2 adjacent RuvB subunits; this complex drives branch migration. In the full resolvosome a probable DNA-RuvA(4)-RuvB(12)-RuvC(2) complex forms which resolves the HJ.

It localises to the cytoplasm. It catalyses the reaction ATP + H2O = ADP + phosphate + H(+). Its function is as follows. The RuvA-RuvB-RuvC complex processes Holliday junction (HJ) DNA during genetic recombination and DNA repair, while the RuvA-RuvB complex plays an important role in the rescue of blocked DNA replication forks via replication fork reversal (RFR). RuvA specifically binds to HJ cruciform DNA, conferring on it an open structure. The RuvB hexamer acts as an ATP-dependent pump, pulling dsDNA into and through the RuvAB complex. RuvB forms 2 homohexamers on either side of HJ DNA bound by 1 or 2 RuvA tetramers; 4 subunits per hexamer contact DNA at a time. Coordinated motions by a converter formed by DNA-disengaged RuvB subunits stimulates ATP hydrolysis and nucleotide exchange. Immobilization of the converter enables RuvB to convert the ATP-contained energy into a lever motion, pulling 2 nucleotides of DNA out of the RuvA tetramer per ATP hydrolyzed, thus driving DNA branch migration. The RuvB motors rotate together with the DNA substrate, which together with the progressing nucleotide cycle form the mechanistic basis for DNA recombination by continuous HJ branch migration. Branch migration allows RuvC to scan DNA until it finds its consensus sequence, where it cleaves and resolves cruciform DNA. In Ehrlichia chaffeensis (strain ATCC CRL-10679 / Arkansas), this protein is Holliday junction branch migration complex subunit RuvB.